A 230-amino-acid chain; its full sequence is 5'-methylthioadenosine/S-adenosylhomocysteine nucleosidase (230 aa).

Catalysis depends on Glu-12, which acts as the Proton acceptor. Substrate-binding positions include Gly-78, Ile-152, and 173-174; that span reads ME. Asp-197 serves as the catalytic Proton donor.

The protein belongs to the PNP/UDP phosphorylase family. MtnN subfamily.

The catalysed reaction is S-adenosyl-L-homocysteine + H2O = S-(5-deoxy-D-ribos-5-yl)-L-homocysteine + adenine. It catalyses the reaction S-methyl-5'-thioadenosine + H2O = 5-(methylsulfanyl)-D-ribose + adenine. The enzyme catalyses 5'-deoxyadenosine + H2O = 5-deoxy-D-ribose + adenine. The protein operates within amino-acid biosynthesis; L-methionine biosynthesis via salvage pathway; S-methyl-5-thio-alpha-D-ribose 1-phosphate from S-methyl-5'-thioadenosine (hydrolase route): step 1/2. Its function is as follows. Catalyzes the irreversible cleavage of the glycosidic bond in both 5'-methylthioadenosine (MTA) and S-adenosylhomocysteine (SAH/AdoHcy) to adenine and the corresponding thioribose, 5'-methylthioribose and S-ribosylhomocysteine, respectively. Also cleaves 5'-deoxyadenosine, a toxic by-product of radical S-adenosylmethionine (SAM) enzymes, into 5-deoxyribose and adenine. The polypeptide is 5'-methylthioadenosine/S-adenosylhomocysteine nucleosidase (Haemophilus influenzae (strain 86-028NP)).